A 984-amino-acid polypeptide reads, in one-letter code: MQEHLIVTLDGTDYLVEPGTSLLEFIKSRDTFVPSICYNESMGPIQTCDTCMVEIDGKIERACSTVVNRPMTVNTQNNDVKASQKEALDRILEKHMLYCTVCDYNNGDCEIHNAMDAWGLEEQSYEYKTKPYEKDYGPFYRYDPDQCILCGRCVEACQDIEVNETISIDWNREHPRVIWDNDVPINESSCVSCGQCATVCPCNAMMEVNMEGNAGYMTDTEPGSLAAMIDLTKKAEPGDGLLFAVSDSEAEMRKERIKKTKTVCTYCGVGCSFDVWTKDREVLKVQPSHDSPANKIATCVKGKFSWGHINSDQRLTKPLVRKDGEFHEVEWDEALDVIETNFKRIKNEYGGDHLAFIASSKGTNEESYLMQKLSRQVFGSNNVDNCSRYCQAPATKGLFRTVGHGGDSGSIEDLERAAMTVLIGTNTAEAHPVIASRMKRAQKLFGQKMHVFDIRKHEMAARADAFYQPKPGTDLVWLGAATKYIIDNDLHDKAFLNDWVDNYEDYYKSLELFTMDFAEETTGIPKEQIISFAEEAAKAESMSICWAMGVTQQDIGSDTSTAISNLLLVTGNYRKPGSGAYPLRGHNNVQGASDMGSMPDQFPGYQKVADDEVRAKFEKEYGVELNPTPGRDNHQMMEGIHNGDIQSLYLYGEDTGIVDSNINFVQSALEKVDFLVVQDEFLTFTATYADVVLPASPSLEKDGTFTNTERRIQRINKALQPLGDSKPDWEIFQLIAQRMGADWNYKHPSEIMDEIAGLTPSYSGVNYERLQGFNSLQWPVAPDGTDQPTLYMDGFNFENGRAKLFPLTFDNFFKEDEVYDLHVNNGRLLEHFHEGNMTYQTEMIKYKVPNAFVEISPELAKDRDIHEGAELRLISETGEATLIATVTDRVKGREIYIPLNNDAMSNGDLGAINKLTNSDVDKYTDTPSYKRTSCRMEVLTRKGKSPLNPTNFRVDKQRNPQYSVQVQKKWERPDYVFPGNVVDK.

A 2Fe-2S ferredoxin-type domain is found at 3–79; the sequence is EHLIVTLDGT…PMTVNTQNND (77 aa). 4 residues coordinate [2Fe-2S] cluster: Cys37, Cys48, Cys51, and Cys63. The 41-residue stretch at 79–119 folds into the 4Fe-4S His(Cys)3-ligated-type domain; that stretch reads DVKASQKEALDRILEKHMLYCTVCDYNNGDCEIHNAMDAWG. His95, Cys99, Cys102, Cys109, Cys147, Cys150, Cys153, Cys157, Cys190, Cys193, Cys196, Cys200, Cys264, Cys267, Cys271, and Cys299 together coordinate [4Fe-4S] cluster. 4Fe-4S ferredoxin-type domains follow at residues 138–165 and 181–211; these read PFYR…VNET and NDVP…VNME. The formate dehydrogenase stretch occupies residues 252–984; the sequence is MRKERIKKTK…YVFPGNVVDK (733 aa). The 4Fe-4S Mo/W bis-MGD-type domain occupies 257-313; the sequence is IKKTKTVCTYCGVGCSFDVWTKDREVLKVQPSHDSPANKIATCVKGKFSWGHINSDQ.

This sequence in the C-terminal section; belongs to the prokaryotic molybdopterin-containing oxidoreductase family. It depends on [2Fe-2S] cluster as a cofactor. Requires [4Fe-4S] cluster as cofactor. Mo-bis(molybdopterin guanine dinucleotide) is required as a cofactor.

It catalyses the reaction formate + NAD(+) = CO2 + NADH. This Staphylococcus haemolyticus (strain JCSC1435) protein is Putative formate dehydrogenase SH0748.